A 68-amino-acid polypeptide reads, in one-letter code: Antimicrobial peptide VpCT3 (68 aa).

Residues 1–23 (MKTQIVILIVAVLVLQLVSQSDA) form the signal peptide. Leucine amide is present on L36. Residues 37–68 (GKRGLKNLDQYNDLFDGEISDADIKFLQDLMR) constitute a propeptide that is removed on maturation.

The protein belongs to the non-disulfide-bridged peptide (NDBP) superfamily. Short antimicrobial peptide (group 4) family. Expressed by the venom gland.

It localises to the secreted. The protein localises to the target cell membrane. In terms of biological role, antimicrobial peptide with weak activity against all bacteria tested (MIC&gt;100 uM) and all yeasts tested (MIC&gt;200 uM). Also provokes weak hemolysis on human erythrocytes (HC(50)=83.7 uM). The protein is Antimicrobial peptide VpCT3 of Mesomexovis punctatus (Scorpion).